The chain runs to 574 residues: Septation ring formation regulator EzrA (574 aa).

The Extracellular segment spans residues Met1 to Ile7. A helical membrane pass occupies residues Leu8–Val26. The Cytoplasmic segment spans residues Arg27–Tyr574. The stretch at Ser105–Met189 forms a coiled coil.

It belongs to the EzrA family.

The protein localises to the cell membrane. In terms of biological role, negative regulator of FtsZ ring formation; modulates the frequency and position of FtsZ ring formation. Inhibits FtsZ ring formation at polar sites. Interacts either with FtsZ or with one of its binding partners to promote depolymerization. The polypeptide is Septation ring formation regulator EzrA (Streptococcus suis (strain 98HAH33)).